The chain runs to 71 residues: Cell division protein ZapB (71 aa).

Positions 5–67 (LEVLEQLESK…RALLGKMEQM (63 aa)) form a coiled coil.

Belongs to the ZapB family. Homodimer. The ends of the coiled-coil dimer bind to each other, forming polymers. Interacts with FtsZ.

It localises to the cytoplasm. Non-essential, abundant cell division factor that is required for proper Z-ring formation. It is recruited early to the divisome by direct interaction with FtsZ, stimulating Z-ring assembly and thereby promoting cell division earlier in the cell cycle. Its recruitment to the Z-ring requires functional FtsA or ZipA. In Aeromonas salmonicida (strain A449), this protein is Cell division protein ZapB.